The following is a 504-amino-acid chain: UDP-N-acetylmuramoylalanine--D-glutamate ligase (504 aa).

ATP is bound at residue 129 to 135; it reads GTNGKTT.

This sequence belongs to the MurCDEF family.

It localises to the cytoplasm. It carries out the reaction UDP-N-acetyl-alpha-D-muramoyl-L-alanine + D-glutamate + ATP = UDP-N-acetyl-alpha-D-muramoyl-L-alanyl-D-glutamate + ADP + phosphate + H(+). It participates in cell wall biogenesis; peptidoglycan biosynthesis. Functionally, cell wall formation. Catalyzes the addition of glutamate to the nucleotide precursor UDP-N-acetylmuramoyl-L-alanine (UMA). This chain is UDP-N-acetylmuramoylalanine--D-glutamate ligase, found in Burkholderia mallei (strain ATCC 23344).